The sequence spans 256 residues: DNA repair protein RecO (256 aa).

This sequence belongs to the RecO family.

In terms of biological role, involved in DNA repair and RecF pathway recombination. This Clostridium novyi (strain NT) protein is DNA repair protein RecO.